An 863-amino-acid chain; its full sequence is Leucine-rich repeat and death domain-containing protein 1 (863 aa).

Disordered regions lie at residues 1–37 and 51–100; these read MSEK…KETS and SSNQ…SQSL. Residues 88 to 100 are compositionally biased toward low complexity; that stretch reads SETSTRTETSQSL. LRR repeat units lie at residues 143 to 166, 167 to 189, 190 to 213, 214 to 236, 238 to 259, 260 to 282, 284 to 305, 306 to 328, 329 to 351, 353 to 374, 375 to 397, 398 to 420, 422 to 443, 445 to 466, 468 to 489, 490 to 513, 515 to 535, 536 to 558, 560 to 581, 582 to 604, 606 to 627, 630 to 653, 654 to 676, 678 to 699, 700 to 722, and 724 to 745; these read CKDN…ILKI, KYVK…DSGD, LLGL…IQLL, HNLR…ISQL, NIRQ…LECL, GNLE…LPSL, YLRV…LCFL, PKLI…IREL, KNLE…IFQL, KIKE…IENF, RELR…ICCC, AMLE…IHKL, NLRK…ISHL, NICS…IKNC, KIIK…LCAL, DSLY…SFSK, LLHL…FCSL, INLK…ISNM, SLHV…LCTL, ENLR…ICNL, RIQK…LCQL, LEQL…LSNM, TQLK…IGEL, NLVS…LLSL, NDLQ…IYNL, and SLKE…ICKG. One can recognise a Death domain in the interval 767–855; sequence EKIFKIVANN…EIMDKITALN (89 aa). One copy of the LRR 27 repeat lies at 856 to 863; sequence LFTRAIKF.

This is Leucine-rich repeat and death domain-containing protein 1 (LRRD1) from Macaca fascicularis (Crab-eating macaque).